The chain runs to 156 residues: Small ribosomal subunit protein uS7 (156 aa).

It belongs to the universal ribosomal protein uS7 family. As to quaternary structure, part of the 30S ribosomal subunit. Contacts proteins S9 and S11.

One of the primary rRNA binding proteins, it binds directly to 16S rRNA where it nucleates assembly of the head domain of the 30S subunit. Is located at the subunit interface close to the decoding center, probably blocks exit of the E-site tRNA. The polypeptide is Small ribosomal subunit protein uS7 (Alcanivorax borkumensis (strain ATCC 700651 / DSM 11573 / NCIMB 13689 / SK2)).